The following is a 173-amino-acid chain: Photosystem I assembly protein Ycf3 (173 aa).

3 TPR repeats span residues 35–68 (AYIYYREGFAAQNNGDYSEALENYEESLKLEENA), 72–105 (GETLKNMAIIYMSNGDEDKALDTYQKALEQNPKQ), and 120–153 (GRALQQNGKQDESDIWFDKAAEVWTKAVRLYPGG).

It belongs to the Ycf3 family.

It is found in the cellular thylakoid membrane. Functionally, essential for the assembly of the photosystem I (PSI) complex. May act as a chaperone-like factor to guide the assembly of the PSI subunits. This chain is Photosystem I assembly protein Ycf3, found in Prochlorococcus marinus (strain SARG / CCMP1375 / SS120).